A 299-amino-acid polypeptide reads, in one-letter code: Hemolysin C homolog (299 aa).

CBS domains lie at 80-142 (MVPR…NGRL) and 145-202 (LIRK…IDDE).

The protein belongs to the UPF0053 family. Hemolysin C subfamily.

In Rickettsia conorii (strain ATCC VR-613 / Malish 7), this protein is Hemolysin C homolog (tlyC).